The following is a 270-amino-acid chain: Monofunctional glycosyltransferase (270 aa).

A compositionally biased stretch (polar residues) spans 1 to 10; sequence MKRSQRMNNS. The segment at 1 to 36 is disordered; sequence MKRSQRMNNSPERHSQYRNEPHYNTYYQPVGKPPKK. Positions 11–21 are enriched in basic and acidic residues; sequence PERHSQYRNEP. A helical membrane pass occupies residues 42 to 62; it reads IFLRLFIIFVFIYALFIGLMY.

It belongs to the glycosyltransferase 51 family.

The protein localises to the cell membrane. It carries out the reaction [GlcNAc-(1-&gt;4)-Mur2Ac(oyl-L-Ala-gamma-D-Glu-L-Lys-D-Ala-D-Ala)](n)-di-trans,octa-cis-undecaprenyl diphosphate + beta-D-GlcNAc-(1-&gt;4)-Mur2Ac(oyl-L-Ala-gamma-D-Glu-L-Lys-D-Ala-D-Ala)-di-trans,octa-cis-undecaprenyl diphosphate = [GlcNAc-(1-&gt;4)-Mur2Ac(oyl-L-Ala-gamma-D-Glu-L-Lys-D-Ala-D-Ala)](n+1)-di-trans,octa-cis-undecaprenyl diphosphate + di-trans,octa-cis-undecaprenyl diphosphate + H(+). Its pathway is cell wall biogenesis; peptidoglycan biosynthesis. Functionally, peptidoglycan polymerase that catalyzes glycan chain elongation using lipid-linked disaccharide-pentapeptide as the substrate. This chain is Monofunctional glycosyltransferase, found in Staphylococcus haemolyticus (strain JCSC1435).